The chain runs to 421 residues: Glutamyl-tRNA reductase (421 aa).

Substrate is bound by residues 49–52 (TCNR), Ser109, 114–116 (EPQ), and Gln120. Cys50 serves as the catalytic Nucleophile. 189–194 (GAGKMS) lines the NADP(+) pocket.

This sequence belongs to the glutamyl-tRNA reductase family. Homodimer.

The catalysed reaction is (S)-4-amino-5-oxopentanoate + tRNA(Glu) + NADP(+) = L-glutamyl-tRNA(Glu) + NADPH + H(+). It participates in porphyrin-containing compound metabolism; protoporphyrin-IX biosynthesis; 5-aminolevulinate from L-glutamyl-tRNA(Glu): step 1/2. Catalyzes the NADPH-dependent reduction of glutamyl-tRNA(Glu) to glutamate 1-semialdehyde (GSA). This is Glutamyl-tRNA reductase from Solibacter usitatus (strain Ellin6076).